A 248-amino-acid chain; its full sequence is Phosphatidylserine decarboxylase proenzyme (248 aa).

S206 serves as the catalytic Schiff-base intermediate with substrate; via pyruvic acid. A Pyruvic acid (Ser); by autocatalysis modification is found at S206.

Belongs to the phosphatidylserine decarboxylase family. PSD-A subfamily. Heterodimer of a large membrane-associated beta subunit and a small pyruvoyl-containing alpha subunit. Pyruvate serves as cofactor. Post-translationally, is synthesized initially as an inactive proenzyme. Formation of the active enzyme involves a self-maturation process in which the active site pyruvoyl group is generated from an internal serine residue via an autocatalytic post-translational modification. Two non-identical subunits are generated from the proenzyme in this reaction, and the pyruvate is formed at the N-terminus of the alpha chain, which is derived from the carboxyl end of the proenzyme. The post-translation cleavage follows an unusual pathway, termed non-hydrolytic serinolysis, in which the side chain hydroxyl group of the serine supplies its oxygen atom to form the C-terminus of the beta chain, while the remainder of the serine residue undergoes an oxidative deamination to produce ammonia and the pyruvoyl prosthetic group on the alpha chain.

The protein localises to the cell membrane. It catalyses the reaction a 1,2-diacyl-sn-glycero-3-phospho-L-serine + H(+) = a 1,2-diacyl-sn-glycero-3-phosphoethanolamine + CO2. Its pathway is phospholipid metabolism; phosphatidylethanolamine biosynthesis; phosphatidylethanolamine from CDP-diacylglycerol: step 2/2. Catalyzes the formation of phosphatidylethanolamine (PtdEtn) from phosphatidylserine (PtdSer). This is Phosphatidylserine decarboxylase proenzyme from Nitrobacter hamburgensis (strain DSM 10229 / NCIMB 13809 / X14).